Consider the following 804-residue polypeptide: Leucine--tRNA ligase (804 aa).

The 'HIGH' region motif lies at 40 to 51; it reads PYPSGAGLHVGH. The short motif at 576–580 is the 'KMSKS' region element; it reads KMSKS. K579 contributes to the ATP binding site.

This sequence belongs to the class-I aminoacyl-tRNA synthetase family.

It localises to the cytoplasm. It catalyses the reaction tRNA(Leu) + L-leucine + ATP = L-leucyl-tRNA(Leu) + AMP + diphosphate. The protein is Leucine--tRNA ligase of Bacillus licheniformis (strain ATCC 14580 / DSM 13 / JCM 2505 / CCUG 7422 / NBRC 12200 / NCIMB 9375 / NCTC 10341 / NRRL NRS-1264 / Gibson 46).